Reading from the N-terminus, the 339-residue chain is Glyceraldehyde-3-phosphate dehydrogenase (339 aa).

Residues 12 to 13 (RI), D39, R84, and S127 each bind NAD(+). D-glyceraldehyde 3-phosphate-binding positions include 157–159 (SCT), T188, R203, 216–217 (TG), and R239. C158 serves as the catalytic Nucleophile. N320 lines the NAD(+) pocket.

This sequence belongs to the glyceraldehyde-3-phosphate dehydrogenase family. Homotetramer.

The protein resides in the cytoplasm. The enzyme catalyses D-glyceraldehyde 3-phosphate + phosphate + NAD(+) = (2R)-3-phospho-glyceroyl phosphate + NADH + H(+). It participates in carbohydrate degradation; glycolysis; pyruvate from D-glyceraldehyde 3-phosphate: step 1/5. Catalyzes the oxidative phosphorylation of glyceraldehyde 3-phosphate (G3P) to 1,3-bisphosphoglycerate (BPG) using the cofactor NAD. The first reaction step involves the formation of a hemiacetal intermediate between G3P and a cysteine residue, and this hemiacetal intermediate is then oxidized to a thioester, with concomitant reduction of NAD to NADH. The reduced NADH is then exchanged with the second NAD, and the thioester is attacked by a nucleophilic inorganic phosphate to produce BPG. The protein is Glyceraldehyde-3-phosphate dehydrogenase (gapA) of Mycobacterium avium.